Here is a 314-residue protein sequence, read N- to C-terminus: uncharacterized protein (314 aa).

Helical transmembrane passes span 23 to 43 and 98 to 118; these read LALGPVHPGGPTLIDLLMALF and MASGIGGALSGALGGVMGPLT. Gly residues predominate over residues 165-184; it reads GLGSGAGGGDVGGGGAGGTT. The interval 165–314 is disordered; that stretch reads GLGSGAGGGD…APDEKTDAGE (150 aa). Residues 190–202 are compositionally biased toward pro residues; sequence GPPPVPTSSPPTT. 2 stretches are compositionally biased toward low complexity: residues 203 to 212 and 219 to 232; these read PAGAPTKSAT and ASPASAHMGAAGMP. A helical membrane pass occupies residues 221 to 241; the sequence is PASAHMGAAGMPMVPPGAMGA. The span at 294-314 shows a compositional bias: basic and acidic residues; sequence LLPEHKDFGRIAPDEKTDAGE.

Its subcellular location is the cell membrane. This is an uncharacterized protein from Mycobacterium tuberculosis (strain ATCC 25618 / H37Rv).